The following is a 144-amino-acid chain: Cell division protein SepF (144 aa).

Polar residues predominate over residues 21–38 (TDLQGTKTTDEVSPTSRP). Residues 21 to 40 (TDLQGTKTTDEVSPTSRPDN) are disordered.

This sequence belongs to the SepF family. As to quaternary structure, homodimer. Interacts with FtsZ.

The protein localises to the cytoplasm. Its function is as follows. Cell division protein that is part of the divisome complex and is recruited early to the Z-ring. Probably stimulates Z-ring formation, perhaps through the cross-linking of FtsZ protofilaments. Its function overlaps with FtsA. This chain is Cell division protein SepF, found in Latilactobacillus sakei subsp. sakei (strain 23K) (Lactobacillus sakei subsp. sakei).